The primary structure comprises 261 residues: Kallikrein-1E2 (261 aa).

The signal sequence occupies residues 1 to 17 (MWFLVLCLDLSLGETGA). Positions 18 to 24 (LPPIQSR) are cleaved as a propeptide — activation peptide. The Peptidase S1 domain maps to 25-258 (IIGGWECEKH…HLKWIKETIE (234 aa)). Disulfide bonds link Cys31-Cys173, Cys50-Cys66, Cys152-Cys219, Cys184-Cys198, and Cys209-Cys234. Catalysis depends on His65, which acts as the Charge relay system. N-linked (GlcNAc...) asparagine glycosylation occurs at Asn79. Asp120 acts as the Charge relay system in catalysis. The Charge relay system role is filled by Ser213.

This sequence belongs to the peptidase S1 family. Kallikrein subfamily. Detected in prostate and semen.

Its subcellular location is the secreted. It catalyses the reaction Preferential cleavage of Arg-|-Xaa bonds in small molecule substrates. Highly selective action to release kallidin (lysyl-bradykinin) from kininogen involves hydrolysis of Met-|-Xaa or Leu-|-Xaa.. Functionally, glandular kallikreins cleave Met-Lys and Arg-Ser bonds in kininogen to release Lys-bradykinin. The chain is Kallikrein-1E2 (KLK1E2) from Equus caballus (Horse).